Here is a 340-residue protein sequence, read N- to C-terminus: Dihydroorotate dehydrogenase (quinone) (340 aa).

FMN is bound by residues 62 to 66 and T86; that span reads AGLDK. K66 serves as a coordination point for substrate. Substrate is bound at residue 111-115; sequence NRMGF. Residues N139 and N172 each contribute to the FMN site. N172 serves as a coordination point for substrate. Residue S175 is the Nucleophile of the active site. N177 is a binding site for substrate. FMN-binding residues include K217 and T245. Substrate is bound at residue 246-247; that stretch reads NT. Residues G268, G297, and 318-319 contribute to the FMN site; that span reads YS.

Belongs to the dihydroorotate dehydrogenase family. Type 2 subfamily. Monomer. FMN serves as cofactor.

Its subcellular location is the cell membrane. The enzyme catalyses (S)-dihydroorotate + a quinone = orotate + a quinol. The protein operates within pyrimidine metabolism; UMP biosynthesis via de novo pathway; orotate from (S)-dihydroorotate (quinone route): step 1/1. In terms of biological role, catalyzes the conversion of dihydroorotate to orotate with quinone as electron acceptor. This chain is Dihydroorotate dehydrogenase (quinone), found in Alkalilimnicola ehrlichii (strain ATCC BAA-1101 / DSM 17681 / MLHE-1).